The sequence spans 615 residues: Nuclear receptor subfamily 1 group D member 1 (615 aa).

The span at 1–12 (MTTLDSNNNTGG) shows a compositional bias: polar residues. The tract at residues 1 to 70 (MTTLDSNNNT…TQDPARSFGS (70 aa)) is required for phosphorylation by CSNK1E and cytoplasmic localization. The tract at residues 1–120 (MTTLDSNNNT…SSRVSPSKGT (120 aa)) is disordered. The tract at residues 1-129 (MTTLDSNNNT…TSNITKLNGM (129 aa)) is modulating. A compositionally biased stretch (low complexity) spans 14–34 (ITYIGSSGSSPSRTSPESLYS). The span at 35–48 (DSSNGSFQSLTQGC) shows a compositional bias: polar residues. Residues 49-285 (PTYFPPSPTG…PPRSPSPEPT (237 aa)) form a crucial for activation of GJA1 region. Phosphoserine; by GSK3-beta occurs at positions 55 and 59. The span at 70-94 (SAPPSLSDDSSPSSASSSSSSSSSS) shows a compositional bias: low complexity. A DNA-binding region (nuclear receptor) is located at residues 130-206 (VLLCKVCGDV…VGMSRDAVRF (77 aa)). NR C4-type zinc fingers lie at residues 133–153 (CKVC…CEGC) and 170–194 (CLKN…FKKC). N6-acetyllysine; by KAT5 occurs at positions 192 and 193. 2 disordered regions span residues 235 to 286 (LCPL…EPTM) and 312 to 337 (PGNF…SQGC). Over residues 240–252 (TSPTPHPTSGSMG) the composition is skewed to low complexity. Pro residues predominate over residues 253-262 (PSPPPAPAPT). Thr275 carries the phosphothreonine; by CDK1 modification. Positions 285–615 (TMEDVISQVA…KLLSFRVDAQ (331 aa)) constitute an NR LBD domain. The span at 312–328 (PGNFNANHASGSPSATT) shows a compositional bias: polar residues. Heme is bound at residue Cys419. Position 592 is an N6-acetyllysine (Lys592). His603 contributes to the heme binding site.

Belongs to the nuclear hormone receptor family. NR1 subfamily. Binds DNA as a monomer or a homodimer. Interacts with NR2E3 and ZNHIT1. Interacts with C1D. Interacts with SP1. Interacts with OPHN1 (via C-terminus). Interacts with PER2; the interaction associates PER2 to BMAL1 promoter region. Interacts with CRY1. Interacts with CCAR2. Interacts with SIAH2. Interacts with FBXW7 and CDK1. Interacts with HUWE1. Interacts with NR0B2. Interacts with NFIL3. Interacts (via domain NR LBD) with HSP90AA1 and HSP90AB1. Ubiquitinated, leading to its proteasomal degradation. Ubiquitinated by the SCF(FBXW7) complex when phosphorylated by CDK1 leading to its proteasomal degradation. Ubiquitinated by SIAH2; leading to its proteasomal degradation. Rapidly ubiquitinated in response to inflammatory triggers and sumoylation is a prerequisite to its ubiquitination. In terms of processing, sumoylated by UBE2I, desumoylated by SENP1, and sumoylation is a prerequisite to its ubiquitination. Post-translationally, phosphorylated by CSNK1E; phosphorylation enhances its cytoplasmic localization. Undergoes lysosome-mediated degradation in a time-dependent manner in the liver. As to expression, expressed during adipocyte differentiation (at protein level). Expressed in skeletal muscle, bladder, lumbar spinal cord, pancreatic islets and hypothalamus. Expressed in developing and adult retina. In the adult retina, predominantly expressed in the outer nuclear layer, where rod and cone cells reside, and also localized to the ganglion cell layer. Expressed in a circadian manner in the liver. Expressed in a circadian manner in the lung with a peak between ZT8 and ZT12.

Its subcellular location is the nucleus. It localises to the cytoplasm. The protein resides in the cell projection. It is found in the dendrite. The protein localises to the dendritic spine. In terms of biological role, transcriptional repressor which coordinates circadian rhythm and metabolic pathways in a heme-dependent manner. Integral component of the complex transcription machinery that governs circadian rhythmicity and forms a critical negative limb of the circadian clock by directly repressing the expression of core clock components BMAL1, CLOCK and CRY1. Also regulates genes involved in metabolic functions, including lipid and bile acid metabolism, adipogenesis, gluconeogenesis and the macrophage inflammatory response. Acts as a receptor for heme which stimulates its interaction with the NCOR1/HDAC3 corepressor complex, enhancing transcriptional repression. Recognizes two classes of DNA response elements within the promoter of its target genes and can bind to DNA as either monomers or homodimers, depending on the nature of the response element. Binds as a monomer to a response element composed of the consensus half-site motif 5'-[A/G]GGTCA-3' preceded by an A/T-rich 5' sequence (RevRE), or as a homodimer to a direct repeat of the core motif spaced by two nucleotides (RevDR-2). Acts as a potent competitive repressor of ROR alpha (RORA) function and regulates the levels of its ligand heme by repressing the expression of PPARGC1A, a potent inducer of heme synthesis. Regulates lipid metabolism by repressing the expression of APOC3 and by influencing the activity of sterol response element binding proteins (SREBPs); represses INSIG2 which interferes with the proteolytic activation of SREBPs which in turn govern the rhythmic expression of enzymes with key functions in sterol and fatty acid synthesis. Regulates gluconeogenesis via repression of G6PC1 and PEPCK and adipocyte differentiation via repression of PPARG. Regulates glucagon release in pancreatic alpha-cells via the AMPK-NAMPT-SIRT1 pathway and the proliferation, glucose-induced insulin secretion and expression of key lipogenic genes in pancreatic-beta cells. Positively regulates bile acid synthesis by increasing hepatic expression of CYP7A1 via repression of NR0B2 and NFIL3 which are negative regulators of CYP7A1. Modulates skeletal muscle oxidative capacity by regulating mitochondrial biogenesis and autophagy; controls mitochondrial biogenesis and respiration by interfering with the STK11-PRKAA1/2-SIRT1-PPARGC1A signaling pathway. Represses the expression of SERPINE1/PAI1, an important modulator of cardiovascular disease and the expression of inflammatory cytokines and chemokines in macrophages. Represses gene expression at a distance in macrophages by inhibiting the transcription of enhancer-derived RNAs (eRNAs). Plays a role in the circadian regulation of body temperature and negatively regulates thermogenic transcriptional programs in brown adipose tissue (BAT); imposes a circadian oscillation in BAT activity, increasing body temperature when awake and depressing thermogenesis during sleep. In concert with NR2E3, regulates transcriptional networks critical for photoreceptor development and function. In addition to its activity as a repressor, can also act as a transcriptional activator. In the ovarian granulosa cells acts as a transcriptional activator of STAR which plays a role in steroid biosynthesis. In collaboration with SP1, activates GJA1 transcription in a heme-independent manner. Represses the transcription of CYP2B10, CYP4A10 and CYP4A14. Represses the transcription of CES2. Represses and regulates the circadian expression of TSHB in a NCOR1-dependent manner. Negatively regulates the protein stability of NR3C1 and influences the time-dependent subcellular distribution of NR3C1, thereby affecting its transcriptional regulatory activity. Plays a critical role in the circadian control of neutrophilic inflammation in the lung; under resting, non-stress conditions, acts as a rhythmic repressor to limit inflammatory activity whereas in the presence of inflammatory triggers undergoes ubiquitin-mediated degradation thereby relieving inhibition of the inflammatory response. Plays a key role in the circadian regulation of microglial activation and neuroinflammation; suppresses microglial activation through the NF-kappaB pathway in the central nervous system. Plays a role in the regulation of the diurnal rhythms of lipid and protein metabolism in the skeletal muscle via transcriptional repression of genes controlling lipid and amino acid metabolism in the muscle. The sequence is that of Nuclear receptor subfamily 1 group D member 1 (Nr1d1) from Mus musculus (Mouse).